A 1406-amino-acid chain; its full sequence is Ubiquitin carboxyl-terminal hydrolase 6 (1406 aa).

In terms of domain architecture, Rab-GAP TBC spans 100 to 292; that stretch reads GIPMNIRGPV…RLWDVYLVEG (193 aa). Residues 348-380 form a disordered region; it reads KLTRKQGDLPPPAKREQGSLAPRPVPASRGGKT. The USP domain occupies 532–1369; it reads TGLSNLGNTC…SAYILFYEQQ (838 aa). Cys-541 (nucleophile) is an active-site residue. The disordered stretch occupies residues 1120 to 1231; sequence HKPLTPQGDE…KKNLDASKEN (112 aa). Positions 1129–1155 are enriched in basic and acidic residues; the sequence is ELSKPRILAREVKKVDAQSSAGKEDML. The segment covering 1156–1197 has biased composition (low complexity); that stretch reads LSKSPSSLSANISSSPKGSPSSSRKSGTSCPSSKNSSPNSSP. The Proton acceptor role is filled by His-1328. The tract at residues 1384–1406 is disordered; the sequence is KMADTSSTDEDSESDYEKYSMLQ.

Belongs to the peptidase C19 family. As to quaternary structure, interacts with RAC1 and CDC42. Interacts (via Rab-GAP TBC domain) with ARF6. Interacts with calmodulin (CALM1, CALM2 and/or CALM3); the interaction is calcium-dependent. Monubiquitinated; ubiquitination is calmodulin and calcium dependent. As to expression, testis specific. Expressed in various cancer cell lines.

It localises to the cell membrane. The protein resides in the cytoplasm. The protein localises to the endosome. The enzyme catalyses Thiol-dependent hydrolysis of ester, thioester, amide, peptide and isopeptide bonds formed by the C-terminal Gly of ubiquitin (a 76-residue protein attached to proteins as an intracellular targeting signal).. Functionally, deubiquitinase with an ATP-independent isopeptidase activity, cleaving at the C-terminus of the ubiquitin moiety. Catalyzes its own deubiquitination. In vitro, isoform 2, but not isoform 3, shows deubiquitinating activity. Promotes plasma membrane localization of ARF6 and selectively regulates ARF6-dependent endocytic protein trafficking. Is able to initiate tumorigenesis by inducing the production of matrix metalloproteinases following NF-kappa-B activation. May act as a GTPase-activating protein for RAB3A. The polypeptide is Ubiquitin carboxyl-terminal hydrolase 6 (USP6) (Homo sapiens (Human)).